We begin with the raw amino-acid sequence, 106 residues long: Cytochrome c (106 aa).

3 residues coordinate heme c: Cys-17, Cys-20, and His-21. At Lys-75 the chain carries N6,N6,N6-trimethyllysine. Position 83 (Met-83) interacts with heme c.

Belongs to the cytochrome c family. Binds 1 heme c group covalently per subunit.

It is found in the mitochondrion intermembrane space. Its function is as follows. Electron carrier protein. The oxidized form of the cytochrome c heme group can accept an electron from the heme group of the cytochrome c1 subunit of cytochrome reductase. Cytochrome c then transfers this electron to the cytochrome oxidase complex, the final protein carrier in the mitochondrial electron-transport chain. This chain is Cytochrome c (CYC1), found in Gibberella zeae (strain ATCC MYA-4620 / CBS 123657 / FGSC 9075 / NRRL 31084 / PH-1) (Wheat head blight fungus).